The sequence spans 335 residues: 2-acylglycerol O-acyltransferase 1 (335 aa).

The next 2 membrane-spanning stretches (helical) occupy residues 24–44 (WVFSFLLLAQCCIGIFICLVL) and 47–67 (VWLLLALYVLWLYLDWETPQA). Residues asparagine 125 and asparagine 180 are each glycosylated (N-linked (GlcNAc...) asparagine).

The protein belongs to the diacylglycerol acyltransferase family.

The protein resides in the endoplasmic reticulum membrane. The enzyme catalyses a 2-acylglycerol + an acyl-CoA = a 1,2-diacylglycerol + CoA. It catalyses the reaction a 2-acylglycerol + an acyl-CoA = a 1,2-diacyl-sn-glycerol + CoA. The catalysed reaction is a 2-acylglycerol + an acyl-CoA = a 2,3-diacyl-sn-glycerol + CoA. It carries out the reaction a 1-acylglycerol + an acyl-CoA = a 1,2-diacylglycerol + CoA. The enzyme catalyses a 1-acylglycerol + an acyl-CoA = a 1,3-diacylglycerol + CoA. It catalyses the reaction a 1-acyl-sn-glycerol + an acyl-CoA = a 1,3-diacyl-sn-glycerol + CoA. The catalysed reaction is a 3-acyl-sn-glycerol + an acyl-CoA = a 1,3-diacyl-sn-glycerol + CoA. Its pathway is glycerolipid metabolism; triacylglycerol biosynthesis. In terms of biological role, involved in glycerolipid synthesis and lipid metabolism. Catalyzes the formation of diacylglycerol, the precursor of triacylglycerol, by transferring the acyl chain of a fatty acyl-CoA to a monoacylglycerol, mainly at the sn-1 or sn-3 positions. It uses both sn-2-monoacylglycerol (2-acylglycerol) and sn-1-monoacylglycerol (1-acyl-sn-glycerol) equally well as substrates, and uses sn-3-monoacylglycerol (3-acyl-sn-glycerol) with lower efficiency. The protein is 2-acylglycerol O-acyltransferase 1 (mogat1) of Xenopus laevis (African clawed frog).